The sequence spans 334 residues: Galactinol synthase 3 (334 aa).

K97 is an active-site residue. Mn(2+) is bound by residues D113, D115, and H251.

The protein belongs to the glycosyltransferase 8 family. Galactosyltransferase subfamily. It depends on a divalent metal cation as a cofactor.

Its subcellular location is the cytoplasm. It carries out the reaction myo-inositol + UDP-alpha-D-galactose = alpha-D-galactosyl-(1-&gt;3)-1D-myo-inositol + UDP + H(+). In terms of biological role, galactinol synthase involved in the biosynthesis of raffinose family oligosaccharides (RFOs) that function as osmoprotectants. May promote plant stress tolerance. This Arabidopsis thaliana (Mouse-ear cress) protein is Galactinol synthase 3 (GOLS3).